Here is a 681-residue protein sequence, read N- to C-terminus: Amine oxidase [copper-containing] alpha 3, peroxisomal (681 aa).

323-334 serves as a coordination point for substrate; that stretch reads YLDCGDFGCGQC. The active-site Proton acceptor is Asp325. An intrachain disulfide couples Cys344 to Cys370. 410–415 lines the substrate pocket; sequence VGNYDY. Tyr413 acts as the Schiff-base intermediate with substrate; via topaquinone in catalysis. Tyr413 is subject to 2',4',5'-topaquinone. Residues His470 and His472 each contribute to the Cu cation site. Mn(2+) contacts are provided by Asp481, Asp621, and Ile622. His632 provides a ligand contact to Cu cation.

The protein belongs to the copper/topaquinone oxidase family. Post-translationally, topaquinone (TPQ) is generated by copper-dependent autoxidation of a specific tyrosyl residue. Mostly expressed in stems, and, at lower levels, in flowers and leaves. Mainly detectable in stipules, hypocotyls and roots.

The protein localises to the peroxisome. The catalysed reaction is a primary methyl amine + O2 + H2O = an aldehyde + H2O2 + NH4(+). It participates in amine and polyamine degradation; putrescine degradation. In terms of biological role, copper amine oxidase that can use putrescine and spermidine as substrates. Involved in putrescine catabolism in peroxisomes. The sequence is that of Amine oxidase [copper-containing] alpha 3, peroxisomal from Arabidopsis thaliana (Mouse-ear cress).